Here is a 692-residue protein sequence, read N- to C-terminus: Translation initiation factor IF-2 (692 aa).

The tr-type G domain occupies 194-363 (PRPPIVTVMG…LLVAEMEDLK (170 aa)). Residues 203–210 (GHVDHGKT) form a G1 region. Residue 203-210 (GHVDHGKT) coordinates GTP. Residues 228–232 (GITQH) form a G2 region. Residues 249 to 252 (DTPG) are G3. GTP is bound by residues 249-253 (DTPGH) and 303-306 (NKID). The segment at 303–306 (NKID) is G4. The segment at 339-341 (SAK) is G5.

Belongs to the TRAFAC class translation factor GTPase superfamily. Classic translation factor GTPase family. IF-2 subfamily.

It is found in the cytoplasm. Its function is as follows. One of the essential components for the initiation of protein synthesis. Protects formylmethionyl-tRNA from spontaneous hydrolysis and promotes its binding to the 30S ribosomal subunits. Also involved in the hydrolysis of GTP during the formation of the 70S ribosomal complex. This is Translation initiation factor IF-2 from Thermoanaerobacter sp. (strain X514).